The primary structure comprises 261 residues: Cytochrome c oxidase subunit 3 (261 aa).

Residues 1–15 (MTHQTHAYHMVNPSP) lie on the Mitochondrial matrix side of the membrane. A helical membrane pass occupies residues 16–34 (WPLTGALSALLMTSGLIMW). The Mitochondrial intermembrane portion of the chain corresponds to 35–40 (FHFNSM). Residues 41-66 (YLLMLGLTTNTLTMYQWWRDIVREST) form a helical membrane-spanning segment. Topologically, residues 67 to 72 (FQGHHT) are mitochondrial matrix. A helical membrane pass occupies residues 73–105 (PIVQKGLRYGMILFIVSEVFFFAGFFWAFYHSS). Over 106-128 (LAPTPELGGCWPPTGITPLNPME) the chain is Mitochondrial intermembrane. Residues 129 to 152 (VPLLNTSVLLASGVSITWAHHSLM) traverse the membrane as a helical segment. Topologically, residues 153–155 (EGN) are mitochondrial matrix. Residues 156–183 (RKHMLQALFITISLGIYFTLLQASEYYE) form a helical membrane-spanning segment. Residues 184 to 190 (TPFTISD) lie on the Mitochondrial intermembrane side of the membrane. A helical transmembrane segment spans residues 191-223 (GIYGSTFFMATGFHGLHVIIGSTFLIVCFVRQL). Residues 224-232 (KFHFTSNHH) are Mitochondrial matrix-facing. The helical transmembrane segment at 233–256 (FGFEAAAWYWHFVDVVWLFLYVSI) threads the bilayer. Residues 257-261 (YWWGS) lie on the Mitochondrial intermembrane side of the membrane.

The protein belongs to the cytochrome c oxidase subunit 3 family. As to quaternary structure, component of the cytochrome c oxidase (complex IV, CIV), a multisubunit enzyme composed of 14 subunits. The complex is composed of a catalytic core of 3 subunits MT-CO1, MT-CO2 and MT-CO3, encoded in the mitochondrial DNA, and 11 supernumerary subunits COX4I, COX5A, COX5B, COX6A, COX6B, COX6C, COX7A, COX7B, COX7C, COX8 and NDUFA4, which are encoded in the nuclear genome. The complex exists as a monomer or a dimer and forms supercomplexes (SCs) in the inner mitochondrial membrane with NADH-ubiquinone oxidoreductase (complex I, CI) and ubiquinol-cytochrome c oxidoreductase (cytochrome b-c1 complex, complex III, CIII), resulting in different assemblies (supercomplex SCI(1)III(2)IV(1) and megacomplex MCI(2)III(2)IV(2)).

It localises to the mitochondrion inner membrane. It catalyses the reaction 4 Fe(II)-[cytochrome c] + O2 + 8 H(+)(in) = 4 Fe(III)-[cytochrome c] + 2 H2O + 4 H(+)(out). Its function is as follows. Component of the cytochrome c oxidase, the last enzyme in the mitochondrial electron transport chain which drives oxidative phosphorylation. The respiratory chain contains 3 multisubunit complexes succinate dehydrogenase (complex II, CII), ubiquinol-cytochrome c oxidoreductase (cytochrome b-c1 complex, complex III, CIII) and cytochrome c oxidase (complex IV, CIV), that cooperate to transfer electrons derived from NADH and succinate to molecular oxygen, creating an electrochemical gradient over the inner membrane that drives transmembrane transport and the ATP synthase. Cytochrome c oxidase is the component of the respiratory chain that catalyzes the reduction of oxygen to water. Electrons originating from reduced cytochrome c in the intermembrane space (IMS) are transferred via the dinuclear copper A center (CU(A)) of subunit 2 and heme A of subunit 1 to the active site in subunit 1, a binuclear center (BNC) formed by heme A3 and copper B (CU(B)). The BNC reduces molecular oxygen to 2 water molecules using 4 electrons from cytochrome c in the IMS and 4 protons from the mitochondrial matrix. This Phoca vitulina (Harbor seal) protein is Cytochrome c oxidase subunit 3 (MT-CO3).